A 130-amino-acid polypeptide reads, in one-letter code: Small ribosomal subunit protein uS8 (130 aa).

It belongs to the universal ribosomal protein uS8 family. In terms of assembly, part of the 30S ribosomal subunit.

Functionally, one of the primary rRNA binding proteins, it binds directly to 16S rRNA central domain where it helps coordinate assembly of the platform of the 30S subunit. The chain is Small ribosomal subunit protein uS8 from Pyrococcus horikoshii (strain ATCC 700860 / DSM 12428 / JCM 9974 / NBRC 100139 / OT-3).